The following is a 346-amino-acid chain: N-acetyl-gamma-glutamyl-phosphate reductase (346 aa).

Cys-149 is a catalytic residue.

It belongs to the NAGSA dehydrogenase family. Type 1 subfamily.

The protein localises to the cytoplasm. It carries out the reaction N-acetyl-L-glutamate 5-semialdehyde + phosphate + NADP(+) = N-acetyl-L-glutamyl 5-phosphate + NADPH + H(+). It participates in amino-acid biosynthesis; L-arginine biosynthesis; N(2)-acetyl-L-ornithine from L-glutamate: step 3/4. Its function is as follows. Catalyzes the NADPH-dependent reduction of N-acetyl-5-glutamyl phosphate to yield N-acetyl-L-glutamate 5-semialdehyde. The protein is N-acetyl-gamma-glutamyl-phosphate reductase of Citrifermentans bemidjiense (strain ATCC BAA-1014 / DSM 16622 / JCM 12645 / Bem) (Geobacter bemidjiensis).